A 729-amino-acid polypeptide reads, in one-letter code: Fatty acid oxidation complex subunit alpha (729 aa).

The segment at 1-189 (MLYKGDTLYL…KIGLVDGVVK (189 aa)) is enoyl-CoA hydratase/isomerase. Asp296 contributes to the substrate binding site. The interval 311–729 (ETPKQAAVLG…ARPVGDLKTA (419 aa)) is 3-hydroxyacyl-CoA dehydrogenase. Residues Met324, Asp343, 400–402 (VVE), Lys407, and Ser429 contribute to the NAD(+) site. Catalysis depends on His450, which acts as the For 3-hydroxyacyl-CoA dehydrogenase activity. Residue Asn453 participates in NAD(+) binding. Substrate-binding residues include Asn500 and Tyr660. A disordered region spans residues 708 to 729 (RHNEPYYPPVEPARPVGDLKTA).

In the N-terminal section; belongs to the enoyl-CoA hydratase/isomerase family. This sequence in the C-terminal section; belongs to the 3-hydroxyacyl-CoA dehydrogenase family. Heterotetramer of two alpha chains (FadB) and two beta chains (FadA).

The enzyme catalyses a (3S)-3-hydroxyacyl-CoA + NAD(+) = a 3-oxoacyl-CoA + NADH + H(+). It catalyses the reaction a (3S)-3-hydroxyacyl-CoA = a (2E)-enoyl-CoA + H2O. The catalysed reaction is a 4-saturated-(3S)-3-hydroxyacyl-CoA = a (3E)-enoyl-CoA + H2O. It carries out the reaction (3S)-3-hydroxybutanoyl-CoA = (3R)-3-hydroxybutanoyl-CoA. The enzyme catalyses a (3Z)-enoyl-CoA = a 4-saturated (2E)-enoyl-CoA. It catalyses the reaction a (3E)-enoyl-CoA = a 4-saturated (2E)-enoyl-CoA. The protein operates within lipid metabolism; fatty acid beta-oxidation. Functionally, involved in the aerobic and anaerobic degradation of long-chain fatty acids via beta-oxidation cycle. Catalyzes the formation of 3-oxoacyl-CoA from enoyl-CoA via L-3-hydroxyacyl-CoA. It can also use D-3-hydroxyacyl-CoA and cis-3-enoyl-CoA as substrate. The sequence is that of Fatty acid oxidation complex subunit alpha from Escherichia coli O7:K1 (strain IAI39 / ExPEC).